A 374-amino-acid polypeptide reads, in one-letter code: Anhydro-N-acetylmuramic acid kinase (374 aa).

12–19 is a binding site for ATP; it reads GTSLDGVD.

The protein belongs to the anhydro-N-acetylmuramic acid kinase family.

It carries out the reaction 1,6-anhydro-N-acetyl-beta-muramate + ATP + H2O = N-acetyl-D-muramate 6-phosphate + ADP + H(+). It participates in amino-sugar metabolism; 1,6-anhydro-N-acetylmuramate degradation. The protein operates within cell wall biogenesis; peptidoglycan recycling. In terms of biological role, catalyzes the specific phosphorylation of 1,6-anhydro-N-acetylmuramic acid (anhMurNAc) with the simultaneous cleavage of the 1,6-anhydro ring, generating MurNAc-6-P. Is required for the utilization of anhMurNAc either imported from the medium or derived from its own cell wall murein, and thus plays a role in cell wall recycling. This Salmonella arizonae (strain ATCC BAA-731 / CDC346-86 / RSK2980) protein is Anhydro-N-acetylmuramic acid kinase.